Consider the following 294-residue polypeptide: Bifunctional protein FolD (294 aa).

Residues 166-168 (GRS), serine 191, and isoleucine 232 contribute to the NADP(+) site.

It belongs to the tetrahydrofolate dehydrogenase/cyclohydrolase family. As to quaternary structure, homodimer.

It catalyses the reaction (6R)-5,10-methylene-5,6,7,8-tetrahydrofolate + NADP(+) = (6R)-5,10-methenyltetrahydrofolate + NADPH. The enzyme catalyses (6R)-5,10-methenyltetrahydrofolate + H2O = (6R)-10-formyltetrahydrofolate + H(+). Its pathway is one-carbon metabolism; tetrahydrofolate interconversion. Catalyzes the oxidation of 5,10-methylenetetrahydrofolate to 5,10-methenyltetrahydrofolate and then the hydrolysis of 5,10-methenyltetrahydrofolate to 10-formyltetrahydrofolate. In Bradyrhizobium diazoefficiens (strain JCM 10833 / BCRC 13528 / IAM 13628 / NBRC 14792 / USDA 110), this protein is Bifunctional protein FolD.